We begin with the raw amino-acid sequence, 490 residues long: Probable cytosol aminopeptidase (490 aa).

Lys262 and Asp267 together coordinate Mn(2+). The active site involves Lys274. The Mn(2+) site is built by Asp285, Asp344, and Glu346. Arg348 is a catalytic residue.

Belongs to the peptidase M17 family. Mn(2+) is required as a cofactor.

Its subcellular location is the cytoplasm. The catalysed reaction is Release of an N-terminal amino acid, Xaa-|-Yaa-, in which Xaa is preferably Leu, but may be other amino acids including Pro although not Arg or Lys, and Yaa may be Pro. Amino acid amides and methyl esters are also readily hydrolyzed, but rates on arylamides are exceedingly low.. It carries out the reaction Release of an N-terminal amino acid, preferentially leucine, but not glutamic or aspartic acids.. Presumably involved in the processing and regular turnover of intracellular proteins. Catalyzes the removal of unsubstituted N-terminal amino acids from various peptides. The chain is Probable cytosol aminopeptidase from Xanthomonas axonopodis pv. citri (strain 306).